Reading from the N-terminus, the 278-residue chain is Digeranylgeranylglyceryl phosphate synthase (278 aa).

8 helical membrane-spanning segments follow: residues 12–32 (LKNCLTASFGAFIGGLIASYF), 34–54 (LATVYDLILASIVVFLVCGFG), 91–111 (LLVFVGLFISLFNMACFLMAV), 129–149 (IIGNLIVAYLTGSVFIFGGIA), 153–173 (IDVTIMLFLCALFAMWSREII), 204–224 (FLLVFAVFLSPLPYLFGFFGI), 225–245 (YYMLSVVFCDLLFLIGIYNLV), and 257–277 (SRNIKIVTNLVLIAFLIGSLF).

The protein belongs to the UbiA prenyltransferase family. DGGGP synthase subfamily. Requires Mg(2+) as cofactor.

Its subcellular location is the cell membrane. The catalysed reaction is sn-3-O-(geranylgeranyl)glycerol 1-phosphate + (2E,6E,10E)-geranylgeranyl diphosphate = 2,3-bis-O-(geranylgeranyl)-sn-glycerol 1-phosphate + diphosphate. Its pathway is membrane lipid metabolism; glycerophospholipid metabolism. In terms of biological role, prenyltransferase that catalyzes the transfer of the geranylgeranyl moiety of geranylgeranyl diphosphate (GGPP) to the C2 hydroxyl of (S)-3-O-geranylgeranylglyceryl phosphate (GGGP). This reaction is the second ether-bond-formation step in the biosynthesis of archaeal membrane lipids. This Methanococcus maripaludis (strain C7 / ATCC BAA-1331) protein is Digeranylgeranylglyceryl phosphate synthase.